Reading from the N-terminus, the 599-residue chain is Elongation factor 4 (599 aa).

The tr-type G domain occupies 4–186 (ENIRNFSIIA…EIVKKIPPPE (183 aa)). GTP is bound by residues 16–21 (DHGKST) and 133–136 (NKID).

It belongs to the TRAFAC class translation factor GTPase superfamily. Classic translation factor GTPase family. LepA subfamily.

The protein localises to the cell inner membrane. It carries out the reaction GTP + H2O = GDP + phosphate + H(+). Its function is as follows. Required for accurate and efficient protein synthesis under certain stress conditions. May act as a fidelity factor of the translation reaction, by catalyzing a one-codon backward translocation of tRNAs on improperly translocated ribosomes. Back-translocation proceeds from a post-translocation (POST) complex to a pre-translocation (PRE) complex, thus giving elongation factor G a second chance to translocate the tRNAs correctly. Binds to ribosomes in a GTP-dependent manner. This is Elongation factor 4 from Geobacter metallireducens (strain ATCC 53774 / DSM 7210 / GS-15).